The sequence spans 1209 residues: Protein phosphatase 1 regulatory subunit 26 (1209 aa).

9 disordered regions span residues 57–91 (DGAA…TVHK), 145–279 (SGAA…HRQG), 291–471 (KPPR…VERS), 501–532 (GSDG…DSDD), 555–694 (GESC…EDLD), 733–836 (EQLG…SNDS), 848–1033 (KAKE…FAHQ), 1052–1072 (RGGV…GLPS), and 1118–1209 (AFRE…VVKV). Residues 63-91 (TSDERAAQRGHRAEGCHDARPAAKPTVHK) are compositionally biased toward basic and acidic residues. Residues 201-219 (QVGSSKDQGSASPVSVSSD) show a composition bias toward low complexity. Over residues 226 to 255 (IRAEIEQFLNEKRQHETQKCDGSVEKKPDT) the composition is skewed to basic and acidic residues. Residues 301–321 (QPRSLRSKVTTTQENEGSTKP) show a composition bias toward polar residues. The segment covering 352–362 (SAAQASEASDS) has biased composition (low complexity). Over residues 442–454 (DTDHAPKLLKETK) the composition is skewed to basic and acidic residues. Composition is skewed to basic and acidic residues over residues 609-637 (KMQE…RRDL), 667-685 (KTDE…DKSS), and 757-766 (SKRDSGEGPG). Low complexity-rich tracts occupy residues 821–836 (PGSL…SNDS) and 852–861 (SVSSSEVQAE). The residue at position 1161 (Ser-1161) is a Phosphoserine. Residues 1187–1209 (GSDASDFSDTSTEDSGGSSVVKV) are compositionally biased toward low complexity.

Interacts with UTP20 and PPP1CA. Ubiquitous in normal tissues. Expressed in numerous adenocarcinoma cell lines.

Its subcellular location is the nucleus. It localises to the nucleolus. Inhibits phosphatase activity of protein phosphatase 1 (PP1) complexes. May positively regulate cell proliferation. The sequence is that of Protein phosphatase 1 regulatory subunit 26 (PPP1R26) from Homo sapiens (Human).